We begin with the raw amino-acid sequence, 112 residues long: UstYa family oxidase VicYb (112 aa).

2 short sequence motifs (HXXHC) span residues 9–13 (HYLHC) and 36–40 (HLDHC).

Belongs to the ustYa family.

It functions in the pathway mycotoxin biosynthesis. UstYa family oxidase, part of the gene cluster that mediates the biosynthesis of the secondary metabolite victorin, the molecular basis for Victoria blight of oats. Within the pathway, vicYb catalyzes the oxidative cyclization of the core peptide. The pathway starts with the processing of the precursor vicA1 by several endopeptidases including kexin proteases as well as the cluster-specific S28 family peptidases vicPa and vicPb to produce 7 identical copies of the hexapeptide Gly-Leu-Lys-Leu-Ala-Phe. After being excised from the precursor peptide, the core peptides are cyclized and modified post-translationally by enzymes encoded within the gene cluster. The ustYa family oxidase vicYb is required for the formation of the macrocycle in victorin and the copper amine oxidases (CAOs) vicK1 and vicK2 are responsible for converting victorin to the active form by oxidizing the N-terminal glycyl residue in the peptides to glyoxylate. Relaxed substrate specificity of enzymes in the victorin biosynthetic pathway results in a metabolic grid that produces a set of analogs including victorinines B, C, E or HV-toxin M. The sequence is that of UstYa family oxidase VicYb from Bipolaris victoriae (strain FI3) (Victoria blight of oats agent).